The primary structure comprises 917 residues: Dolichyl-phosphooligosaccharide-protein glycotransferase (917 aa).

Basic and acidic residues predominate over residues 1–10; it reads MTENNEKVKN. The interval 1–20 is disordered; the sequence is MTENNEKVKNSDSANNQSSK. Topologically, residues 1–38 are cytoplasmic; sequence MTENNEKVKNSDSANNQSSKNSKFNFNFEDKKVKCAKT. Over residues 11–20 the composition is skewed to low complexity; the sequence is SDSANNQSSK. The chain crosses the membrane as a helical span at residues 39 to 59; it reads ILIIIFLAFLSFQMRAQTADM. The Extracellular portion of the chain corresponds to 60–154; it reads GFTTNEQYLD…AMDSTVTLMN (95 aa). The DXD motif 1 signature appears at 82–84; the sequence is ALD. Aspartate 84 serves as a coordination point for Mn(2+). Residues 155–175 form a helical membrane-spanning segment; the sequence is AAFWVPAILSMFLITPIFFTV. The Cytoplasmic portion of the chain corresponds to 176–182; it reads RRITSSD. The chain crosses the membrane as a helical span at residues 183-203; it reads IGGAVAAILASLSPSIFVKTV. Residues 204–209 lie on the Extracellular side of the membrane; the sequence is AGFSDT. Position 208 (aspartate 208) interacts with Mn(2+). The DXD motif 2 motif lies at 208–210; that stretch reads DTP. A helical transmembrane segment spans residues 210–230; sequence PILEILPLLFIVWFIIEAIHY. Topologically, residues 231–237 are cytoplasmic; sequence SKEKNYK. The chain crosses the membrane as a helical span at residues 238-260; that stretch reads SLIYGLLATLMLALYPFMWSAWW. Residues 261–263 are Extracellular-facing; sequence YGY. Residues 264–286 form a helical membrane-spanning segment; the sequence is YIVIAFLVIYAIYKGISYNSIAK. Residues 287 to 308 lie on the Cytoplasmic side of the membrane; the sequence is YTKSKNNNHKDKIESEKLEMLN. A helical transmembrane segment spans residues 309 to 329; that stretch reads ILKISGLFIIGGAVLITALYG. The Extracellular segment spans residues 330-372; the sequence is VSTTMNALQAPLNYLGLDEVSSQTGWPNVLTTVSELDTASLDE. The TIXE motif signature appears at 361–364; sequence TVSE. Residue glutamate 364 participates in Mn(2+) binding. A helical transmembrane segment spans residues 373–393; sequence IISSSLGSIHLFAIGLIGIFL. Residues 394-413 are Cytoplasmic-facing; that stretch reads SLFRKVLTPVKQISNGLAEK. A helical transmembrane segment spans residues 414–434; sequence LDIKYALLLIIWFAVTFLAAS. At 435–438 the chain is on the extracellular side; it reads KGVR. Arginine 438 is a binding site for a glycophospholipid. The chain crosses the membrane as a helical span at residues 439–459; sequence FVALMVPPLSIGVGIFVGFIE. At 460–469 the chain is on the cytoplasmic side; that stretch reads QFIKNNLDKK. The helical transmembrane segment at 470–490 threads the bilayer; sequence YEYVAYPTIAIIVLYALFTIY. The Extracellular portion of the chain corresponds to 491 to 506; sequence RADSADLVRMLLPSNY. Residues 507 to 527 form a helical membrane-spanning segment; the sequence is VPIAEGIMLASLAVLIIYKVA. Over 528-541 the chain is Cytoplasmic; that stretch reads ELIAESNKKLVMNK. Residues 542–562 traverse the membrane as a helical segment; sequence IFMILLAIGLITPTIATIVPF. Over 563–917 the chain is Extracellular; it reads YSVPTYNDGW…FSVDYGNYSK (355 aa). The interval 592–594 is interacts with target acceptor peptide in protein substrate; sequence WWD. The short motif at 592–596 is the WWDYG motif element; it reads WWDNG. Positions 719 to 726 match the MI motif motif; the sequence is MTSIASVW.

Belongs to the STT3 family. The cofactor is Mn(2+). It depends on Mg(2+) as a cofactor.

It localises to the cell membrane. It catalyses the reaction an archaeal dolichyl phosphooligosaccharide + [protein]-L-asparagine = an archaeal dolichyl phosphate + a glycoprotein with the oligosaccharide chain attached by N-beta-D-glycosyl linkage to a protein L-asparagine.. Its pathway is cell surface structure biogenesis; S-layer biogenesis. The protein operates within protein modification; protein glycosylation. Its function is as follows. Oligosaccharyl transferase (OST) that catalyzes the initial transfer of a defined glycan (ManNAcGlc-2,3-diNAcAGlcNAc in M.voltae) from the lipid carrier dolichol-monophosphate to an asparagine residue within an Asn-X-Ser/Thr consensus motif in nascent polypeptide chains, the first step in protein N-glycosylation. Involved in the assembly of an N-linked disaccharide that decorates the S-layer glycoprotein and flagellins. The chain is Dolichyl-phosphooligosaccharide-protein glycotransferase from Methanococcus voltae.